The sequence spans 341 residues: Phenylalanine--tRNA ligase alpha subunit (341 aa).

Glu254 contacts Mg(2+).

Belongs to the class-II aminoacyl-tRNA synthetase family. Phe-tRNA synthetase alpha subunit type 1 subfamily. In terms of assembly, tetramer of two alpha and two beta subunits. Mg(2+) is required as a cofactor.

It localises to the cytoplasm. The catalysed reaction is tRNA(Phe) + L-phenylalanine + ATP = L-phenylalanyl-tRNA(Phe) + AMP + diphosphate + H(+). The protein is Phenylalanine--tRNA ligase alpha subunit of Chlorobaculum parvum (strain DSM 263 / NCIMB 8327) (Chlorobium vibrioforme subsp. thiosulfatophilum).